We begin with the raw amino-acid sequence, 228 residues long: Cell surface Cu-only superoxide dismutase 5 (228 aa).

The N-terminal stretch at 1–15 (MKYLSIFLLATFALA) is a signal peptide. Asparagine 53 carries N-linked (GlcNAc...) asparagine glycosylation. Cu cation is bound by residues histidine 75 and histidine 77. An N-linked (GlcNAc...) asparagine glycan is attached at asparagine 86. Cysteine 87 and cysteine 162 are disulfide-bonded. A Cu cation-binding site is contributed by histidine 93. N-linked (GlcNAc...) asparagine glycosylation occurs at asparagine 98. Histidine 153 lines the Cu cation pocket. 5 N-linked (GlcNAc...) asparagine glycosylation sites follow: asparagine 156, asparagine 164, asparagine 176, asparagine 181, and asparagine 192. The span at 176–201 (NTTMSNSSSSSSQSAVNTSSSMASTA) shows a compositional bias: low complexity. The interval 176 to 204 (NTTMSNSSSSSSQSAVNTSSSMASTAPQG) is disordered. Asparagine 205 carries the GPI-anchor amidated asparagine lipid modification. Positions 206 to 228 (GAERAVVNGLLAAGVVGVIAALI) are cleaved as a propeptide — removed in mature form.

Belongs to the Cu-Zn superoxide dismutase family. As to quaternary structure, monomer. The cofactor is Cu cation. The GPI-anchor is attached to the protein in the endoplasmic reticulum and serves to target the protein to the cell surface. There, the glucosamine-inositol phospholipid moiety is cleaved off and the GPI-modified mannoprotein is covalently attached via its lipidless GPI glycan remnant to the 1,6-beta-glucan of the outer cell wall layer.

Its subcellular location is the secreted. It is found in the cell wall. It localises to the membrane. The enzyme catalyses 2 superoxide + 2 H(+) = H2O2 + O2. Secreted in a disulfide-oxidized form and apo-pools of secreted SOD5 can readily capture extracellular copper for rapid induction of enzyme activity. Functionally, superoxide dismutases serve to convert damaging superoxide radicals, a key form of ROS, to less damaging hydrogen peroxide that can be converted into water by catalase action. Degrades host-derived reactive oxygen species to escape innate immune surveillance. Involved in the occurrence of miconazole-tolerant persisters in biofilms. Persisters are cells that survive high doses of an antimicrobial agent. The unusual attributes of SOD5-like fungal proteins, including the absence of zinc and an open active site that readily captures extracellular copper, make these SODs well suited to meet challenges in zinc and copper availability at the host-pathogen interface. The sequence is that of Cell surface Cu-only superoxide dismutase 5 (SOD5) from Candida albicans (strain SC5314 / ATCC MYA-2876) (Yeast).